The sequence spans 371 residues: Polygalacturonase (371 aa).

A signal peptide spans 1 to 19; it reads MPSYLRNLVWATLAAGLVS. A propeptide spanning residues 20-34 is cleaved from the precursor; it reads AAPTPSRVSDLTKKS. The cysteines at positions 38 and 53 are disulfide-linked. PbH1 repeat units follow at residues 95–117, 165–195, 196–217, 218–238, 247–268, 276–298, and 310–355; these read GPLIKISGSDITVEAADGAVINA, SDNLIIDGVTIDNSDGDENGGHNTDGFDISE, STGVTIRNAVVKNQDDCIAINS, GQNIYFTGGTCSGGHGLSIGS, VKNVTITDSTVTDSANGVRIKT, VSDVTFSDITVSGITDYGIVIEQ, and TSGV…DITS. The active-site Proton donor is Asp-210. Cysteines 212 and 228 form a disulfide. His-232 is a catalytic residue. Asn-249 carries an N-linked (GlcNAc...) asparagine glycan. 2 disulfides stabilise this stretch: Cys-338-Cys-343 and Cys-362-Cys-371.

It belongs to the glycosyl hydrolase 28 family.

It is found in the secreted. It carries out the reaction (1,4-alpha-D-galacturonosyl)n+m + H2O = (1,4-alpha-D-galacturonosyl)n + (1,4-alpha-D-galacturonosyl)m.. The chain is Polygalacturonase from Penicillium janthinellum (Penicillium vitale).